A 472-amino-acid polypeptide reads, in one-letter code: Glutamate--tRNA ligase 1 (472 aa).

The 'HIGH' region motif lies at 13 to 23 (PSPTGYLHIGG). Residues cysteine 102, cysteine 104, cysteine 129, and glutamate 131 each coordinate Zn(2+). The short motif at 239–243 (RLSKR) is the 'KMSKS' region element. Lysine 242 contacts ATP.

It belongs to the class-I aminoacyl-tRNA synthetase family. Glutamate--tRNA ligase type 1 subfamily. As to quaternary structure, monomer. Zn(2+) is required as a cofactor.

The protein resides in the cytoplasm. It catalyses the reaction tRNA(Glu) + L-glutamate + ATP = L-glutamyl-tRNA(Glu) + AMP + diphosphate. Functionally, catalyzes the attachment of glutamate to tRNA(Glu) in a two-step reaction: glutamate is first activated by ATP to form Glu-AMP and then transferred to the acceptor end of tRNA(Glu). This Syntrophus aciditrophicus (strain SB) protein is Glutamate--tRNA ligase 1.